Reading from the N-terminus, the 644-residue chain is uncharacterized protein (644 aa).

The disordered stretch occupies residues 1–39 (MKANGLDNDPARTRMERTDIDSEHPEAQPLLNNNHRTLG). Topologically, residues 1 to 90 (MKANGLDNDP…ILNILILINT (90 aa)) are cytoplasmic. A compositionally biased stretch (basic and acidic residues) spans 9–26 (DPARTRMERTDIDSEHPE). Phosphoserine occurs at positions 22, 56, and 63. A helical transmembrane segment spans residues 91-111 (IWLVTTLISDFFFNINILFGF). The Vacuolar portion of the chain corresponds to 112 to 122 (SNRYASFNDLT). The chain crosses the membrane as a helical span at residues 123 to 143 (LIFISIIANSFNLWFNKLGLY). Residues 144-147 (SALD) are Cytoplasmic-facing. The chain crosses the membrane as a helical span at residues 148-168 (YSLNVTLCVLTLFNLALTYLI). The Vacuolar portion of the chain corresponds to 169-174 (KYTRQR). The helical transmembrane segment at 175–195 (IGFVGTFTYLWTSFSFFIGAI) threads the bilayer. Over 196–271 (LDWYLLFYNN…EWVSIGFRNT (76 aa)) the chain is Cytoplasmic. The tract at residues 225-251 (NENHTNSTENRDRSQYGSGSPTPTHRS) is disordered. Over residues 239–251 (QYGSGSPTPTHRS) the composition is skewed to polar residues. Position 244 is a phosphoserine (Ser-244). A helical transmembrane segment spans residues 272 to 292 (IKFLILIFFALFTLNTLLTTL). The Vacuolar segment spans residues 293–644 (DTYRLTHKLP…IGELGKLTED (352 aa)). In terms of domain architecture, AB hydrolase-1 spans 348 to 619 (PIILFEHGGY…IVEGGHEIYK (272 aa)). Residues 469 to 492 (GRGDGDDGDDGNGNDGDGRNHDKT) are disordered.

The protein resides in the vacuole membrane. This is an uncharacterized protein from Saccharomyces cerevisiae (strain YJM789) (Baker's yeast).